The chain runs to 463 residues: Competence protein ComFA (463 aa).

The Zn(2+) site is built by cysteine 60, cysteine 63, cysteine 84, and cysteine 87. In terms of domain architecture, Helicase ATP-binding spans 133–285; it reads IEAISKKEEL…LNGQLHSVRI (153 aa). 146–153 is an ATP binding site; that stretch reads AVCGAGKT. A DEAD box motif is present at residues 233–236; the sequence is DEVD. The region spanning 317-463 is the Helicase C-terminal domain; that stretch reads AVKRWIEFHV…ELAAKVECTD (147 aa).

This sequence belongs to the DEAD box helicase family. In terms of assembly, monomer and dimer in solution. Interacts with DprA and ComFC; ComFA-ComFC form rings about 150 Angstroms in diameter with apparent 6-fold symmetry. Zn(2+) serves as cofactor.

It localises to the cytoplasm. Its function is as follows. Involved in transformation (genetic competence for DNA uptake). Required for DNA uptake but not for DNA binding to cells. DNA uptake is energy dependent, this protein may provide the driving force for DNA uptake. Does not have helicase activity, translocates on single-stranded (ss)DNA in a 5'-3' direction in an ATP-dependent manner, but does not unwind double-stranded (ds)DNA. ATP hydrolysis causes the release of ssDNA from ComFA. A ssDNA-stimulated ATPase; dsDNA does not stimulate ATPase. ATP hydrolysis causes the release of ssDNA from ComFA. Binds ssDNA but only very poorly to dsDNA in the absence of ATP. Binding to ssDNA does not require free DNA ends. This chain is Competence protein ComFA, found in Bacillus subtilis (strain 168).